Here is an 84-residue protein sequence, read N- to C-terminus: Translational regulator CsrA (84 aa).

The protein belongs to the CsrA/RsmA family. In terms of assembly, homodimer; the beta-strands of each monomer intercalate to form a hydrophobic core, while the alpha-helices form wings that extend away from the core.

The protein localises to the cytoplasm. Its function is as follows. A translational regulator that binds mRNA to regulate translation initiation and/or mRNA stability. Usually binds in the 5'-UTR at or near the Shine-Dalgarno sequence preventing ribosome-binding, thus repressing translation. Its main target seems to be the major flagellin gene, while its function is anatagonized by FliW. The polypeptide is Translational regulator CsrA (Leptospira interrogans serogroup Icterohaemorrhagiae serovar Lai (strain 56601)).